Consider the following 491-residue polypeptide: Acetyl-coenzyme A carboxylase carboxyl transferase subunit beta, chloroplastic (491 aa).

Residues 224 to 491 (LWIQCENCYG…FFPLNPKKIK (268 aa)) form the CoA carboxyltransferase N-terminal domain. Zn(2+)-binding residues include C228, C231, C247, and C250. The C4-type zinc-finger motif lies at 228–250 (CENCYGLNYKKNLKSKINICEQC).

Belongs to the AccD/PCCB family. In terms of assembly, acetyl-CoA carboxylase is a heterohexamer composed of biotin carboxyl carrier protein, biotin carboxylase and 2 subunits each of ACCase subunit alpha and ACCase plastid-coded subunit beta (accD). It depends on Zn(2+) as a cofactor.

The protein resides in the plastid. The protein localises to the chloroplast stroma. It carries out the reaction N(6)-carboxybiotinyl-L-lysyl-[protein] + acetyl-CoA = N(6)-biotinyl-L-lysyl-[protein] + malonyl-CoA. It functions in the pathway lipid metabolism; malonyl-CoA biosynthesis; malonyl-CoA from acetyl-CoA: step 1/1. Its function is as follows. Component of the acetyl coenzyme A carboxylase (ACC) complex. Biotin carboxylase (BC) catalyzes the carboxylation of biotin on its carrier protein (BCCP) and then the CO(2) group is transferred by the transcarboxylase to acetyl-CoA to form malonyl-CoA. The sequence is that of Acetyl-coenzyme A carboxylase carboxyl transferase subunit beta, chloroplastic from Vitis vinifera (Grape).